Reading from the N-terminus, the 364-residue chain is Peroxidase (364 aa).

A signal peptide spans 1-20 (MKLSLFSTFAAVIIGALALP). Q21 bears the Pyrrolidone carboxylic acid mark. Intrachain disulfides connect C32/C44, C43/C313, C63/C149, and C277/C342. Catalysis depends on H76, which acts as the Proton acceptor. Residues D77, G95, D97, and S99 each coordinate Ca(2+). N-linked (GlcNAc...) (high mannose) asparagine glycosylation occurs at N163. H204 contributes to the heme b binding site. Residues S205, D222, T224, V227, and D229 each coordinate Ca(2+).

This sequence belongs to the peroxidase family. Ligninase subfamily. Requires Ca(2+) as cofactor. The cofactor is heme b.

The protein localises to the secreted. The enzyme catalyses 2 a phenolic donor + H2O2 = 2 a phenolic radical donor + 2 H2O. This is Peroxidase from Arthromyces ramosus.